The primary structure comprises 529 residues: MGSILSRRIAGVEDIDIQANSAYRYPPKSGNYFTSHFFMGGEKFDTPHPEGYLFGENMDLNFLGNRPVQFPYVTPAAHEPVKTLRSLVNIRKDSLRLVRYKDDSDSTPEDTGDPRVLYSVEFCFDTDARVAITLYCQAFEEFANGMAIYSAKSPSMVSETVHYKRGINQQFSLPSFKIDFTKWKPEELNFDLDKGVFPLVVQAIVDDGDDVTGHAHVLLAAFERHVDGSFSVKPLKQKQIVDRVSYLLQEIYGIENRNNQETKSTEDENSDNSSECVVCLSDLRDTLILPCRHLCLCNACADTLRYQANNCPICRLPFRALLQIRAVRKKTAATLSPVSFSPVLSQSSDHTEHSNADNIPPGYEPISLLEALNGVQPVSPSIPSAPLYEEIQFSGEMGDPLNLTGRQQNGDPGALKGKGSKSPDGSVRSPSSPIQEEEDEERLSELSDAQPQSVLPCSLSPSEDTVEGVTAKPGLPNSGSESRSLGVSVSEILQDCHSERSSLSQSESDPSADLALPASESWSTAVEEC.

Residues glutamate 275–cysteine 314 form an RING-type zinc finger. 2 disordered regions span residues serine 341 to glycine 362 and glutamate 396 to cysteine 529. 2 stretches are compositionally biased toward polar residues: residues alanine 449–glutamate 463 and asparagine 477–valine 487. The span at serine 501 to serine 511 shows a compositional bias: low complexity. The span at glutamate 520–cysteine 529 shows a compositional bias: polar residues.

Autoubiquitinated in vitro.

The catalysed reaction is S-ubiquitinyl-[E2 ubiquitin-conjugating enzyme]-L-cysteine + [acceptor protein]-L-lysine = [E2 ubiquitin-conjugating enzyme]-L-cysteine + N(6)-ubiquitinyl-[acceptor protein]-L-lysine.. Its pathway is protein modification; protein ubiquitination. E3 ubiquitin-protein ligase. Also acts as a negative regulator of hedgehog signaling. The protein is Probable E3 ubiquitin-protein ligase MGRN1 (mgrn1) of Danio rerio (Zebrafish).